Consider the following 134-residue polypeptide: UPF0102 protein Adeh_1910 (134 aa).

Belongs to the UPF0102 family.

This chain is UPF0102 protein Adeh_1910, found in Anaeromyxobacter dehalogenans (strain 2CP-C).